The sequence spans 485 residues: REST corepressor 1 (485 aa).

Disordered regions lie at residues 1–26 (MPAMVEKGPEVSGKRRGRNNAAASAS) and 49–110 (AAAS…VGPQ). 2 stretches are compositionally biased toward low complexity: residues 49–64 (AAASSASAAAASAAAA) and 74–95 (AAAAPNGNSSSNSWEEGSSGSS). The interval 78 to 257 (PNGNSSSNSW…RHARKQKRER (180 aa)) is interaction with HDAC1. In terms of domain architecture, ELM2 spans 103–189 (GGMRVGPQYQ…KSLADLPNFT (87 aa)). K122 participates in a covalent cross-link: Glycyl lysine isopeptide (Lys-Gly) (interchain with G-Cter in SUMO2). At S127 the chain carries Phosphoserine. The region spanning 190–241 (PFPDEWTVEDKVLFEQAFSFHGKTFHRIQQMLPDKSIASLVKFYYSWKKTRT) is the SANT 1 domain. The stretch at 244–273 (SVMDRHARKQKREREESEDELEEANGNNPI) forms a coiled coil. A disordered region spans residues 244 to 314 (SVMDRHARKQ…AKNRAKRKPP (71 aa)). Phosphoserine is present on S260. Over residues 278–288 (DQNKESKKEVP) the composition is skewed to basic and acidic residues. The tract at residues 296 to 384 (VKKEKHSTQA…LPEVIQKCNA (89 aa)) is interaction with KDM1A. K297 is covalently cross-linked (Glycyl lysine isopeptide (Lys-Gly) (interchain with G-Cter in SUMO2)). Residues 334–369 (ATTVLRQLDMELVSVKRQIQNIKQTNSALKEKLDGG) adopt a coiled-coil conformation. Positions 381 to 432 (KCNARWTTEEQLLAVQAIRKYGRDFQAISDVIGNKSVVQVKNFFVNYRRRFN) constitute an SANT 2 domain. Residues 442–485 (AEHGKEETNGPSNQKPVKSPDNSIKMPEEEDEAPVLDVRYASAS) form a disordered region. The segment covering 450–463 (NGPSNQKPVKSPDN) has biased composition (polar residues). S460 is modified (phosphoserine). K466 participates in a covalent cross-link: Glycyl lysine isopeptide (Lys-Gly) (interchain with G-Cter in SUMO2).

It belongs to the CoREST family. In terms of assembly, interacts directly with GFI1 and GFI1B in a RCOR/GFI/KDM1A/HDAC complex. Interacts with INMS1. Component of a BHC histone deacetylase complex that contains HDAC1, HDAC2, HMG20B/BRAF35, KDM1A, RCOR1/CoREST and PHF21A/BHC80. The BHC complex may also contain ZMYM2, ZNF217, ZMYM3, GSE1 and GTF2I. Interacts with REST. Interacts with the SMARCE1/BAF57, suggesting that the BHC complex may recruit the ATP-dependent chromatin-remodeling SWI-SNF complex. Interacts with SOX2. As to quaternary structure, (Microbial infection) Interacts with herpes virus HSV-1 ICP0 protein; the interaction leads to the disruption of the BHC complex, thereby preventing the BHC complex from repressing transcription of viral genes. Phosphorylated by HSV-1 protein kinases in case of infection. Ubiquitously expressed.

Its subcellular location is the nucleus. In terms of biological role, essential component of the BHC complex, a corepressor complex that represses transcription of neuron-specific genes in non-neuronal cells. The BHC complex is recruited at RE1/NRSE sites by REST and acts by deacetylating and demethylating specific sites on histones, thereby acting as a chromatin modifier. In the BHC complex, it serves as a molecular beacon for the recruitment of molecular machinery, including MeCP2 and SUV39H1, that imposes silencing across a chromosomal interval. Plays a central role in demethylation of Lys-4 of histone H3 by promoting demethylase activity of KDM1A on core histones and nucleosomal substrates. It also protects KDM1A from the proteasome. Component of a RCOR/GFI/KDM1A/HDAC complex that suppresses, via histone deacetylase (HDAC) recruitment, a number of genes implicated in multilineage blood cell development and controls hematopoietic differentiation. This chain is REST corepressor 1 (RCOR1), found in Homo sapiens (Human).